We begin with the raw amino-acid sequence, 276 residues long: Rhomboid protease GlpG (276 aa).

6 consecutive transmembrane segments (helical) span residues 94–114 (GPVT…MQIL), 142–162 (ALMH…WYLG), 169–189 (LGSG…GYVQ), 192–212 (FSGP…GYVW), 229–249 (LIIF…GMSM), and 250–270 (ANGA…VDSL). Residue S201 is the Nucleophile of the active site. The active site involves H254.

This sequence belongs to the peptidase S54 family.

It localises to the cell inner membrane. The enzyme catalyses Cleaves type-1 transmembrane domains using a catalytic dyad composed of serine and histidine that are contributed by different transmembrane domains.. Rhomboid-type serine protease that catalyzes intramembrane proteolysis. In Escherichia coli O157:H7, this protein is Rhomboid protease GlpG.